The sequence spans 71 residues: Large ribosomal subunit protein bL31 (71 aa).

Cys-16, Cys-18, Cys-37, and Cys-40 together coordinate Zn(2+).

The protein belongs to the bacterial ribosomal protein bL31 family. Type A subfamily. Part of the 50S ribosomal subunit. Zn(2+) is required as a cofactor.

Its function is as follows. Binds the 23S rRNA. This Mannheimia succiniciproducens (strain KCTC 0769BP / MBEL55E) protein is Large ribosomal subunit protein bL31.